Here is a 176-residue protein sequence, read N- to C-terminus: NAD(P)H-quinone oxidoreductase subunit 6, chloroplastic (176 aa).

5 consecutive transmembrane segments (helical) span residues 10 to 30 (ILLVFLGLGLILGGLGVVLLT), 32 to 52 (PIYSAFSLGLVLVCISLFHIP), 61 to 81 (AQLLIYVGAVNVLIVFAVMFM), 107 to 127 (ILFSLITTIWNTSWYGIIWTT), and 152 to 172 (FYLPFELISIILLAALIGAIA).

Belongs to the complex I subunit 6 family. NDH is composed of at least 16 different subunits, 5 of which are encoded in the nucleus.

It localises to the plastid. It is found in the chloroplast thylakoid membrane. It catalyses the reaction a plastoquinone + NADH + (n+1) H(+)(in) = a plastoquinol + NAD(+) + n H(+)(out). The catalysed reaction is a plastoquinone + NADPH + (n+1) H(+)(in) = a plastoquinol + NADP(+) + n H(+)(out). Its function is as follows. NDH shuttles electrons from NAD(P)H:plastoquinone, via FMN and iron-sulfur (Fe-S) centers, to quinones in the photosynthetic chain and possibly in a chloroplast respiratory chain. The immediate electron acceptor for the enzyme in this species is believed to be plastoquinone. Couples the redox reaction to proton translocation, and thus conserves the redox energy in a proton gradient. The protein is NAD(P)H-quinone oxidoreductase subunit 6, chloroplastic (ndhG) of Calycanthus floridus var. glaucus (Eastern sweetshrub).